The following is a 92-amino-acid chain: MAHKKGASSSSNGRDSESKRLGVKRFGGQQVKAGEIIVRQRGTKFHPGENVGRGGDDTLFALAAGSVEFGVKRGRRLVNIVPAEEAAAEATA.

Residues 1 to 26 (MAHKKGASSSSNGRDSESKRLGVKRF) are disordered.

The protein belongs to the bacterial ribosomal protein bL27 family.

This is Large ribosomal subunit protein bL27 from Corynebacterium aurimucosum (strain ATCC 700975 / DSM 44827 / CIP 107346 / CN-1) (Corynebacterium nigricans).